The chain runs to 1207 residues: Systemin receptor SR160 (1207 aa).

An N-terminal signal peptide occupies residues 1–34; it reads MKAHKTVFNQHPLSLNKLFFVLLLIFFLPPASPA. Positions 71 to 78 match the Cys pair 1 motif; that stretch reads CSFTGVSC. LRR repeat units lie at residues 109–131, 135–157, 161–181, 186–207, 213–234, 235–257, 258–280, 282–304, 305–325, 329–350, 353–375, 378–401, 402–423, 428–450, 452–474, 476–499, 500–523, 524–547, 548–570, and 572–594; these read NLES…AKSQ, TLDS…SSFG, NLKS…EMLK, SLQV…PWVS, ELEF…LDFK, NLSY…KDCS, NLQH…LSSC, KLSF…PSES, LQYL…QLAD, TVVE…SLGE, SLEL…TLLK, NIKT…SNLP, KLET…GICK, NLKV…LSNC, QLVS…LGSL, KLKD…MYLQ, ALEN…SNCT, KLNW…GRLS, NLAI…LGNC, and SLIW…LFKQ. An N-linked (GlcNAc...) asparagine glycan is attached at asparagine 119. Residues asparagine 166 and asparagine 196 are each glycosylated (N-linked (GlcNAc...) asparagine). Residues asparagine 235 and asparagine 245 are each glycosylated (N-linked (GlcNAc...) asparagine). N-linked (GlcNAc...) asparagine glycosylation occurs at asparagine 287. Asparagine 339 and asparagine 363 each carry an N-linked (GlcNAc...) asparagine glycan. N-linked (GlcNAc...) asparagine glycosylation is found at asparagine 412 and asparagine 449. A glycan (N-linked (GlcNAc...) asparagine) is linked at asparagine 521. 4 N-linked (GlcNAc...) asparagine glycosylation sites follow: asparagine 556, asparagine 584, asparagine 646, and asparagine 662. LRR repeat units follow at residues 664–686, 688–711, 712–735, and 736–758; these read SMIF…LGAM, YLSI…GGLK, NVAI…TSLT, and LLGE…APFD. Asparagine 724, asparagine 746, and asparagine 767 each carry an N-linked (GlcNAc...) asparagine glycan. Residues 771–779 carry the Cys pair 2 motif; sequence CGYPLPLPC. A helical transmembrane segment spans residues 803–823; that stretch reads SVAMGLLFSLFCIFGLIIVAI. One can recognise a Protein kinase domain in the interval 888–1163; that stretch reads FHNDSLVGSG…IQVMAMFKEI (276 aa). ATP contacts are provided by residues 894–902 and lysine 916; that span reads VGSGGFGDV. The Proton acceptor role is filled by aspartate 1014.

This sequence belongs to the protein kinase superfamily. Ser/Thr protein kinase family. Glycosylated.

Its subcellular location is the cell membrane. It catalyses the reaction L-seryl-[protein] + ATP = O-phospho-L-seryl-[protein] + ADP + H(+). The catalysed reaction is L-threonyl-[protein] + ATP = O-phospho-L-threonyl-[protein] + ADP + H(+). Its function is as follows. Receptor with a serine/threonine-protein kinase activity. Involved in the perception of systemin, a peptide hormone responsible for the systemic activation of defense genes in leaves of wounded plants. May also regulate, in response to brassinosteroid binding, a signaling cascade involved in plant development. This Solanum peruvianum (Peruvian tomato) protein is Systemin receptor SR160.